Consider the following 210-residue polypeptide: Protein GrpE (210 aa).

Residues 1-12 (MSDQAKDERAPS) are compositionally biased toward basic and acidic residues. Disordered regions lie at residues 1–26 (MSDQ…RTEG) and 191–210 (IAAE…EKDA).

This sequence belongs to the GrpE family. In terms of assembly, homodimer.

Its subcellular location is the cytoplasm. Functionally, participates actively in the response to hyperosmotic and heat shock by preventing the aggregation of stress-denatured proteins, in association with DnaK and GrpE. It is the nucleotide exchange factor for DnaK and may function as a thermosensor. Unfolded proteins bind initially to DnaJ; upon interaction with the DnaJ-bound protein, DnaK hydrolyzes its bound ATP, resulting in the formation of a stable complex. GrpE releases ADP from DnaK; ATP binding to DnaK triggers the release of the substrate protein, thus completing the reaction cycle. Several rounds of ATP-dependent interactions between DnaJ, DnaK and GrpE are required for fully efficient folding. This chain is Protein GrpE, found in Mesorhizobium japonicum (strain LMG 29417 / CECT 9101 / MAFF 303099) (Mesorhizobium loti (strain MAFF 303099)).